The sequence spans 293 residues: Acidic endochitinase SE2 (293 aa).

The N-terminal stretch at 1–25 (MAAKIVSVLFLISLLIFASFESSHG) is a signal peptide. Residues 26-293 (SQIVIYWGQN…GYSSAIKSSV (268 aa)) enclose the GH18 domain. Intrachain disulfides connect cysteine 45/cysteine 91 and cysteine 75/cysteine 81. Glutamate 151 acts as the Proton donor in catalysis. A disulfide bridge links cysteine 183 with cysteine 212.

This sequence belongs to the glycosyl hydrolase 18 family. Chitinase class II subfamily. In terms of tissue distribution, accumulates in leaves during infection.

It is found in the secreted. The protein localises to the extracellular space. It carries out the reaction Random endo-hydrolysis of N-acetyl-beta-D-glucosaminide (1-&gt;4)-beta-linkages in chitin and chitodextrins.. In terms of biological role, this protein functions as a defense against chitin containing fungal pathogens. This endochitinase also exhibits exochitinase activity, i.e. it is capable of hydrolyzing chito-oligosaccharides, including chitobiose. This Beta vulgaris (Sugar beet) protein is Acidic endochitinase SE2 (SE2).